A 354-amino-acid polypeptide reads, in one-letter code: MAATLPRDRLRQITDRFEYLEAQLNGGPDPSDIAKISREYAELKPVVAEIAGYEQLLADMAEAQNMLADPDMRPLAEEELPRLEAAIPAAEQSLQLALLPKDAADAKPAMIEIRPGTGGDEAALFAGDLLRMYTRYAEARGWRLEIVDLQESDLGGIKECTARVEGENVFARLKFESGVHRVQRVPETESGGRIHTSAATVAVLPEAEDVDIDIPATDIRIDTMRASGAGGQHVNTTDSAVRITHVPSGIVVVSSEKSQHRNREIAMQTLRTRLYDLERQKADDAMAADRKAQIGSGDRSERIRTYNFPQGRMTDHRINLTLYKLDAVMLGDLDEIVDALTAEDQAMKLAEMTG.

Glutamine 232 is subject to N5-methylglutamine.

This sequence belongs to the prokaryotic/mitochondrial release factor family. Post-translationally, methylated by PrmC. Methylation increases the termination efficiency of RF1.

The protein resides in the cytoplasm. Functionally, peptide chain release factor 1 directs the termination of translation in response to the peptide chain termination codons UAG and UAA. The polypeptide is Peptide chain release factor 1 (Jannaschia sp. (strain CCS1)).